Here is a 336-residue protein sequence, read N- to C-terminus: tRNA N6-adenosine threonylcarbamoyltransferase (336 aa).

Residues histidine 115, histidine 119, and tyrosine 136 each coordinate Fe cation. Substrate contacts are provided by residues 136-140 (YVAGG), aspartate 168, glutamate 185, and serine 266. Aspartate 294 contacts Fe cation.

The protein belongs to the KAE1 / TsaD family. It depends on Fe(2+) as a cofactor.

Its subcellular location is the cytoplasm. The enzyme catalyses L-threonylcarbamoyladenylate + adenosine(37) in tRNA = N(6)-L-threonylcarbamoyladenosine(37) in tRNA + AMP + H(+). Its function is as follows. Required for the formation of a threonylcarbamoyl group on adenosine at position 37 (t(6)A37) in tRNAs that read codons beginning with adenine. Is probably involved in the transfer of the threonylcarbamoyl moiety of threonylcarbamoyl-AMP (TC-AMP) to the N6 group of A37. The polypeptide is tRNA N6-adenosine threonylcarbamoyltransferase (Thermofilum pendens (strain DSM 2475 / Hrk 5)).